The chain runs to 271 residues: MRLYRDTAVVLRLHKLGEADHIVTLLTRQFGLVRAVAKGVRRTTSKFGARLEPFAHIDVQLLPGKNLDIITQVQTVDAFATDIVDDYSRYTTACAVLETAERLAGEERAPAPQLQRLTVGALRAIAEQARPVEFVLDAFLLRAMGYAGWAPALEECARCSAPGPHRAFHVAAGGAVCTYCRPAGAATPSPGVLDLMEALLRGEWEGTDSAPATLRTQASGLVAAHLQWHLERQLRTLPLIERSRPHAAVEVDLSVRQDGTRDSTTRTANSA.

Belongs to the RecO family.

Functionally, involved in DNA repair and RecF pathway recombination. The polypeptide is DNA repair protein RecO (Rhodococcus erythropolis (strain PR4 / NBRC 100887)).